A 316-amino-acid polypeptide reads, in one-letter code: Putative transketolase C-terminal section (316 aa).

It belongs to the transketolase family. It depends on thiamine diphosphate as a cofactor.

The enzyme catalyses D-sedoheptulose 7-phosphate + D-glyceraldehyde 3-phosphate = aldehydo-D-ribose 5-phosphate + D-xylulose 5-phosphate. This chain is Putative transketolase C-terminal section, found in Methanocaldococcus jannaschii (strain ATCC 43067 / DSM 2661 / JAL-1 / JCM 10045 / NBRC 100440) (Methanococcus jannaschii).